The sequence spans 316 residues: Olfactory receptor 10H28 (316 aa).

Over Met-1–Pro-26 the chain is Extracellular. N-linked (GlcNAc...) asparagine glycosylation is present at Asn-5. The helical transmembrane segment at Ala-27 to Met-47 threads the bilayer. Residues Ala-48 to His-57 are Cytoplasmic-facing. Residues Thr-58–Ile-78 traverse the membrane as a helical segment. The Extracellular portion of the chain corresponds to Thr-79–Asn-100. Residues Cys-98 and Cys-190 are joined by a disulfide bond. The chain crosses the membrane as a helical span at residues Gln-101–Tyr-121. Residues Asp-122 to Arg-144 are Cytoplasmic-facing. Residues Leu-145–Phe-165 form a helical membrane-spanning segment. Topologically, residues His-166–Thr-207 are extracellular. Residues Pro-208–Leu-228 form a helical membrane-spanning segment. Residues Arg-229 to Ser-241 are Cytoplasmic-facing. Residues Thr-242–Leu-262 form a helical membrane-spanning segment. Over Lys-263–Asp-273 the chain is Extracellular. The helical transmembrane segment at Thr-274 to Leu-294 threads the bilayer. Residues Arg-295–Ile-316 lie on the Cytoplasmic side of the membrane.

The protein belongs to the G-protein coupled receptor 1 family.

It is found in the cell membrane. In terms of biological role, odorant receptor. This chain is Olfactory receptor 10H28, found in Mus musculus (Mouse).